A 1469-amino-acid chain; its full sequence is Regulation of nuclear pre-mRNA domain-containing protein 2 (1469 aa).

N-acetylalanine is present on alanine 2. At serine 16 the chain carries Phosphoserine. One can recognise a CID domain in the interval 19 to 149 (SAGALESSLD…ALREALMDRA (131 aa)). Disordered stretches follow at residues 329 to 445 (STLP…TAAP) and 489 to 524 (TGVSSASRPSPGIPTSPSNLSSGLKTPAPATTPSHN). Positions 370-386 (ESDKSATPEPVTDNRDV) are enriched in basic and acidic residues. Serine 374 bears the Phosphoserine mark. Threonine 376 carries the phosphothreonine modification. Residues 387 to 396 (EDMELSDVED) are compositionally biased toward acidic residues. Serine 392 carries the phosphoserine modification. Residues 397-412 (DGSKIIVEDRKEKPVE) are compositionally biased toward basic and acidic residues. Positions 419–430 (GVPTKSTESVSK) are enriched in polar residues. Pro residues predominate over residues 434–445 (CAPPSVPTTAAP). Serine 492, serine 495, serine 498, and serine 504 each carry phosphoserine. Threonine 536 carries the phosphothreonine modification. Residues 572 to 594 (ASEVTSQSTTASPASTTGSAVKG) are disordered. The span at 576–591 (TSQSTTASPASTTGSA) shows a compositional bias: low complexity. Phosphoserine is present on residues serine 583 and serine 612. Residue threonine 617 is modified to Phosphothreonine. Serine 633 carries the post-translational modification Phosphoserine. The segment covering 647-656 (SLGFTGTHNP) has biased composition (polar residues). 7 disordered regions span residues 647-686 (SLGFTGTHNPSPAAPPTEVAVCQSSEVSKPKPESESTSPS), 716-867 (SSAP…AMMN), 919-1013 (SENC…SGVE), 1033-1140 (KNAS…HGRE), 1154-1183 (SSFDNGPSSASELASLGGGGSGGLTGFKTT), 1204-1328 (FNST…PTPP), and 1368-1414 (GPGL…HRDA). Residues serine 682, serine 684, serine 735, and serine 738 each carry the phosphoserine modification. Phosphothreonine is present on threonine 742. Serine 749 is modified (phosphoserine). Position 751 is a phosphothreonine (threonine 751). Polar residues predominate over residues 761–771 (PTSSSVDTMSL). Phosphoserine occurs at positions 777 and 781. Residues 777–787 (SPGSSTPSSTR) are compositionally biased toward low complexity. Phosphothreonine is present on threonine 782. Phosphoserine occurs at positions 788, 836, 845, 919, and 947. The segment covering 959-982 (PDSNHSGLSQSTAGHLTLPQTQYP) has biased composition (polar residues). Phosphoserine occurs at positions 984 and 995. The segment covering 1047-1073 (QTPNKGTSSDGVSLSNLTQPSLPTTDQ) has biased composition (polar residues). Phosphoserine is present on residues serine 1086 and serine 1117. Residues 1159-1168 (GPSSASELAS) are compositionally biased toward low complexity. Gly residues predominate over residues 1169-1178 (LGGGGSGGLT). The span at 1272 to 1295 (GPPPPPGEHSGVPFPPPPPPPPPG) shows a compositional bias: pro residues. Arginine 1375 carries the post-translational modification Asymmetric dimethylarginine. 2 stretches are compositionally biased toward low complexity: residues 1377 to 1390 (SLSLPSHPLEHLGP) and 1400 to 1409 (TSSSGLPLSP). 2 positions are modified to asymmetric dimethylarginine: arginine 1432 and arginine 1438.

As to quaternary structure, associates with the RNA polymerase II complex.

The protein is Regulation of nuclear pre-mRNA domain-containing protein 2 (Rprd2) of Mus musculus (Mouse).